Reading from the N-terminus, the 422-residue chain is MKCKVEKSKISGQIVCPSNKSYTHRAIFLASLAGNGSKVENVLLSADTMATVEACKKFGASIEIENSSIIVKNPIKFDKIVPEINTENSGTTIRIASGIASLFSEEITLTGDESLQKRPMQPLLDALSSIGAQCQSTDGKPPIKITGKISGGDVTIPGNFSSQFISALLISAPLTEKGINLSIKDNLVSKPYLDATIATMRKFGVSVQTLIPYKRYNISPQVYNAATFTVPIDFSSLALLLSAAVLNGDETVIKGNIGNLPQGDEVFIDILEQLGVTVNIGEDEIKIKSPEKLKGGRFDLSNSPDLLPPLTILALNSENPIEIVNVKHARLKETDRIAITSRELVKLGIKVQENEDGLILESTENLTGAELNSENDHRLFMAFCIAGMYVGNCVVTDPESVQVSYPDFVEEMNRIGARIQPE.

3-phosphoshikimate contacts are provided by Lys-20, Ser-21, and Arg-25. A phosphoenolpyruvate-binding site is contributed by Lys-20. Residues Gly-90 and Arg-118 each contribute to the phosphoenolpyruvate site. Positions 161, 162, 163, 189, 305, and 332 each coordinate 3-phosphoshikimate. Gln-163 is a binding site for phosphoenolpyruvate. Asp-305 serves as the catalytic Proton acceptor. Arg-336 and Arg-378 together coordinate phosphoenolpyruvate.

This sequence belongs to the EPSP synthase family. In terms of assembly, monomer.

The protein localises to the cytoplasm. It catalyses the reaction 3-phosphoshikimate + phosphoenolpyruvate = 5-O-(1-carboxyvinyl)-3-phosphoshikimate + phosphate. It participates in metabolic intermediate biosynthesis; chorismate biosynthesis. Functionally, catalyzes the transfer of the enolpyruvyl moiety of phosphoenolpyruvate (PEP) to the 5-hydroxyl of shikimate-3-phosphate (S3P) to produce enolpyruvyl shikimate-3-phosphate and inorganic phosphate. This is 3-phosphoshikimate 1-carboxyvinyltransferase from Nitrosopumilus maritimus (strain SCM1).